The chain runs to 359 residues: Peptide chain release factor 1 (359 aa).

Glutamine 235 is subject to N5-methylglutamine.

It belongs to the prokaryotic/mitochondrial release factor family. In terms of processing, methylated by PrmC. Methylation increases the termination efficiency of RF1.

The protein resides in the cytoplasm. Peptide chain release factor 1 directs the termination of translation in response to the peptide chain termination codons UAG and UAA. The sequence is that of Peptide chain release factor 1 from Anaplasma phagocytophilum (strain HZ).